A 220-amino-acid polypeptide reads, in one-letter code: Charged multivesicular body protein 2a (220 aa).

Coiled-coil stretches lie at residues 12 to 53 (EELL…MAKQ) and 198 to 219 (EATA…NLRR). Residues 196–220 (KGEATAALADADADLEERLNNLRRD) are disordered. The short motif at 208 to 218 (ADLEERLNNLR) is the MIT-interacting motif element. Positions 211–220 (EERLNNLRRD) are enriched in basic and acidic residues.

It belongs to the SNF7 family. As to quaternary structure, probable core component of the endosomal sorting required for transport complex III (ESCRT-III). ESCRT-III components are thought to multimerize to form a flat lattice on the perimeter membrane of the endosome.

The protein resides in the late endosome membrane. Its subcellular location is the cytoplasm. In terms of biological role, probable core component of the endosomal sorting required for transport complex III (ESCRT-III) which is involved in multivesicular bodies (MVBs) formation and sorting of endosomal cargo proteins into MVBs. MVBs contain intraluminal vesicles (ILVs) that are generated by invagination and scission from the limiting membrane of the endosome and mostly are delivered to lysosomes enabling degradation of membrane proteins, such as stimulated growth factor receptors, lysosomal enzymes and lipids. In Xenopus laevis (African clawed frog), this protein is Charged multivesicular body protein 2a (chmp2a).